Reading from the N-terminus, the 316-residue chain is Prenytransferase adrG (316 aa).

The next 7 membrane-spanning stretches (helical) occupy residues 36-56 (LLGF…CASI), 60-80 (KIPI…SIFL), 131-151 (VLIY…FFAL), 163-183 (PQIT…SLGL), 191-211 (PTVC…VIYS), 247-267 (GFLA…VVSV), and 294-314 (KSAF…EYCL).

This sequence belongs to the UbiA prenyltransferase family. Mg(2+) is required as a cofactor.

The protein localises to the membrane. It catalyses the reaction 3,5-dimethylorsellinate + (2E,6E)-farnesyl diphosphate = (3R)-3-farnesyl-6-hydroxy-2,3,5-trimethyl-4-oxocyclohexa-1,5-diene-1-carboxylate + diphosphate + H(+). It participates in secondary metabolite biosynthesis; terpenoid biosynthesis. Its function is as follows. Prenytransferase; part of the gene cluster that mediates the biosynthesis of andrastins, meroterpenoid compounds that exhibit inhibitory activity against ras farnesyltransferase, suggesting that they could be promising leads for antitumor agents. The first step of the pathway is the synthesis of 3,5-dimethylorsellinic acid (DMOA) by the polyketide synthase adrD via condensation of one acetyl-CoA starter unit with 3 malonyl-CoA units and 2 methylations. DMAO is then converted to farnesyl-DMAO by the prenyltransferase adrG. The methyltransferase adrK catalyzes the methylation of the carboxyl group of farnesyl-DMAO to farnesyl-DMAO methyl ester which is further converted to epoxyfarnesyl-DMAO methyl ester by the FAD-dependent monooxygenase adrH. The terpene cyclase adrI then catalyzes the carbon skeletal rearrangement to generate the andrastin E, the first compound in the pathway having the andrastin scaffold, with the tetracyclic ring system. The post-cyclization tailoring enzymes adrF, adrE, adrJ, and adrA, are involved in the conversion of andrastin E into andrastin A. The short chain dehydrogenase adrF is responsible for the oxidation of the C-3 a hydroxyl group of andrastin E to yield the corresponding ketone, andrastin D. The ketoreductase adrE stereoselectively reduces the carbonyl moiety to reverse the stereochemistry of the C-3 position to yield andrastin F. The acetyltransferase adrJ is the acetyltransferase that attaches the acetyl group to the C-3 hydroxyl group of andrastin F to yield andrastin C. Finally, the cytochrome P450 monooxygenase adrA catalyzes two sequential oxidation reactions of the C-23 methyl group, to generate the corresponding alcohol andrastin B, and aldehyde andrastin A. The sequence is that of Prenytransferase adrG from Penicillium roqueforti.